Here is a 248-residue protein sequence, read N- to C-terminus: Histone H1, gonadal (248 aa).

2 disordered regions span residues 1 to 46 (PGSP…PPVL) and 115 to 248 (AVAK…KARK). Residues 9–39 (ASPRKSPRKSPKKSPRKASASPRRKAKRARA) show a composition bias toward basic residues. One can recognise an H15 domain in the interval 41-115 (THPPVLEMVQ…GASGRFRVGA (75 aa)). Residues 118–248 (KPKKAKKTSA…KRRSPKKARK (131 aa)) are compositionally biased toward basic residues.

It belongs to the histone H1/H5 family. In terms of tissue distribution, sperm.

Its subcellular location is the nucleus. The protein resides in the chromosome. Histones H1 are necessary for the condensation of nucleosome chains into higher-order structures. In Parechinus angulosus (Angulate sea urchin), this protein is Histone H1, gonadal.